The following is a 664-amino-acid chain: MNSRPLLVTCGLPYTNGPCHLGHLRTYVPADFYVRFMRRKGEEVVFICGSDNHGTPIVVSAEKEGTTPRQISERYHTHFSDTFTKMQVHFDHFGMTDDPTTHARTKHLVSRLIDRGYVYPKVIQQAYCIHCQKFLPDRYLEGICPHCKKPARGDECDQGCGKHLEPGEILEPTCKICGNRAEYREQEHFFFKLSGFQDWLREYLGELKGTDNAINYALGWVNEDLHDWCITRTLEWGVKFPGHDDLVVYVWVDAPIGYIGFTEEWAEKTGRDWKTYWCGENTRVTHFIGQDITYHHCVFWPAMLHGAGYGTPYAVVASGMLKIDDHKFSKSRGYVVWTNEDYLDQGLPADYLRYYLLSYTSHTKEMNFSWQLFQERINNEVVNNLGNFIYRSLHLSQKQFGGVPEGVVEQEIFDRITEAIGQVTGLVEAYDFKGAVDAILALSAWGNTYIQSKEPWKLAKTDQAAMAQVMRNCLQLAKALTLLIEPVMPERAGLIWSQLGQDSLIANNGFSAGLEPLSPGPLPAPSIVFSKIDDKMTQELDKRLRDRIDALDAEKKPKTPEISIEEFAKVEMKTGKILSAEQVPKSTKLLKLQVSIGDEVRQIVSGIAQFHNPEELVGKDVVVCTNLKPAKIFGIESNGMILAAGDNASLLRPETPVPSGTKIR.

The 'HIGH' region motif lies at 13 to 23 (PYTNGPCHLGH). Positions 144, 147, 156, and 160 each coordinate Zn(2+). The 'KMSKS' region motif lies at 327 to 331 (KFSKS). Lys-330 provides a ligand contact to ATP. In terms of domain architecture, tRNA-binding spans 566–664 (EFAKVEMKTG…TPVPSGTKIR (99 aa)).

It belongs to the class-I aminoacyl-tRNA synthetase family. MetG type 1 subfamily. Homodimer. Requires Zn(2+) as cofactor.

It is found in the cytoplasm. It carries out the reaction tRNA(Met) + L-methionine + ATP = L-methionyl-tRNA(Met) + AMP + diphosphate. Its function is as follows. Is required not only for elongation of protein synthesis but also for the initiation of all mRNA translation through initiator tRNA(fMet) aminoacylation. This is Methionine--tRNA ligase from Methanospirillum hungatei JF-1 (strain ATCC 27890 / DSM 864 / NBRC 100397 / JF-1).